Consider the following 389-residue polypeptide: Cellobiose 2-epimerase (389 aa).

This sequence belongs to the cellobiose 2-epimerase family.

The catalysed reaction is D-cellobiose = beta-D-glucosyl-(1-&gt;4)-D-mannopyranose. In terms of biological role, catalyzes the reversible epimerization of cellobiose to 4-O-beta-D-glucopyranosyl-D-mannose (Glc-Man). The polypeptide is Cellobiose 2-epimerase (Ruminococcus albus (strain ATCC 27210 / DSM 20455 / JCM 14654 / NCDO 2250 / 7)).